Consider the following 3011-residue polypeptide: MSTNPKPQRKTKRNTNRRPQDVKFPGGGQIVGGVYLLPRRGPRVGVRATRKTSERSQPRGRRQPIPKARRPEGRSWAQPGYPWPLYGNEGCGWAGWLLSPRGSRPSWGPSDPRRRSRNLGKVIDTLTCGFADLMGYIPLVGAPLGGAARALAHGVRVLEDGVNYATGNLPGCSFSIFLLALLSCLTVPASAVGVRNSSGVYHVTNDCPNASVVYETENLIMHLPGCVPYVREGNASRCWVSLSPTVAARDSRVPVSEVRRRVDSIVGAAAFCSAMYVGDLCGSIFLVGQIFTFSPRHHWTTQDCNCSIYPGHVTGHRMAWDMMMNWSPTGALVVAQLLRIPQAIVDMIAGAHWGVLAGLAYYSMVGNWAKVVVVLLLFAGVDAETRVTGGAAGHTAFGFASFLAPGAKQKIQLINTNGSWHINRTALNCNESLDTGWLAGLLYYHKFNSSGCPERMASCQPLTAFDQGWGPITHEGNASDDQRPYCWHYALRPCGIVPAKKVCGPVYCFTPSPVVVGTTDRAGVPTYRWGANETDVLLLNNSRPPMGNWFGCTWMNSSGFTKTCGAPACNIGGSGNNTLLCPTDCFRKHPDATYSRCGSGPWLTPRCLVDYPYRLWHYPCTVNYTIFKIRMFVGGVEHRLDAACNWTRGERCDLDDRDRAELSPLLLSTTQWQVLPCSFTTLPALSTGLIHLHQNIVDVQYLYGLSSAVTSWVIKWEYVVLLFLLLADARICACLWMMLLISQVEAALENLIVLNAASLVGTHGIVPFFIFFCAAWYLKGKWAPGLAYSVYGMWPLLLLLLALPQRAYALDQELAASCGATVFICLAVLTLSPYYKQYMARGIWWLQYMLTRAEALLQVWVPPLNARGGRDGVVLLTCVLHPHLLFEITKIMLAILGPLWILQASLLKVPYFVRAHGLIRLCMLVRKTAGGQYVQMALLKLGAFAGTYIYNHLSPLQDWAHSGLRDLAVATEPVIFSRMEIKTITWGADTAACGDIINGLPVSARRGREVLLGPADALTDKGWRLLAPITAYAQQTRGLLGCIITSLTGRDKNQVEGEVQIVSTATQTFLATCVNGVCWTVYHGAGSRTIASASGPVIQMYTNVDQDLVGWPAPQGARSLTPCTCGASDLYLVTRHADVIPVRRRGDNRGSLLSPRPISYLKGSSGGPLLCPMGHAVGIFRAAVCTRGVAKAVDFVPVESLETTMRSPVFTDNSSPPTVPQSYQVAHLHAPTGSGKSTKVPAAYAAQGYKVLVLNPSVAATLGFGAYMSKAHGIDPNVRTGVRTITTGSPITHSTYGKFLADGGCSGGAYDIIICDECHSVDATSILGIGTVLDQAETAGVRLTILATATPPGSVTVPHSNIEEVALSTEGEIPFYGKAIPLNYIKGGRHLIFCHSKKKCDELAAKLVGLGVNAVAFYRGLDVSVIPTTGDVVVVATDALMTGYTGDFDSVIDCNTCVVQTVDFSLDPTFSIETSTVPQDAVSRSQRRGRTGRGKHGIYRYVSPGERPSGMFDSVVLCECYDAGCAWYELTPAETTVRLRAYLNTPGLPVCQDHLEFWESVFTGLTHIDAHFLSQTKQSGENFPYLVAYQATVCARAKAPPPSWDQMWKCLIRLKPTLTGATPLLYRLGGVQNEITLTHPITKYIMACMSADLEVVTSTWVLVGGVLAALAAYCLSTGSVVIVGRIILSGKPAVIPDREVLYREFDEMEECAAHIPYLEQGMHLAEQFKQKALGLLQTASKQAETITPAVHTNWQKLESFWAKHMWNFVSGIQYLAGLSTLPGNPAIASLMSFTAAVTSPLTTQQTLLFNILGGWVAAQLAAPAAATAFVGAGITGAVIGSVGLGKVLVDILAGYGAGVAGALVAFKIMSGEAPTAEDLVNLLPAILSPGALVVGVVCAAILRRHVGPGEGAVQWMNRLIAFASRGNHVSPTHYVPESDASVRVTHILTSLTVTQLLKRLHVWISSDCTAPCAGSWLKDVWDWICEVLSDFKSWLKAKLMPQLPGIPFVSCQRGYRGVWRGEGIMHARCPCGADITGHVKNGSMRIVGPKTCSNTWRGSFPINAHTTGPCTPSPAPNYTFALWRVSAEEYVEVRRLGDFHYITGVTTDKIKCPCQVPSPEFFTEVDGVRLHRYAPPCKPLLRDEVTFSIGLNEYLVGSQLPCEPEPDVAVLTSMLTDPSHITAETAARRLNRGSPPSLASSSASQLSAPSLKATCTTHHDSPDADLITANLLWRQEMGGNITRVESENKIVILDSFDPLVAEEDDREISVPAEILLKSKKFPPAMPIWARPDYNPPLVEPWKRPDYEPPLVHGCPLPPPKPTPVPPPRRKRTVVLDESTVSSALAELATKTFGSSTTSGVTSGEAAESSPAPSCDGELDSEAESYSSMPPLEGEPGDPDLSDGSWSTVSSDGGTEDVVCCSMSYSWTGALITPCAAEETKLPINALSNSLLRHHNLVYSTTSRSAGQRQKKVTFDRLQVLDDHYRDVLKEAKAKASTVKAKLLSVEEACSLTPPHSARSKFGYGAKDVRSHSSKAIRHINSVWQDLLEDNTTPIDTTIMAKNEVFCVKPEKGGRKPARLIVYPDLGVRVCEKRALYDVVKQLPIAVMGTSYGFQYSPAQRVDFLLNAWKSKKNPMGFSYDTRCFDSTVTEADIRTEEDLYQSCDLVPEARAAIRSLTERLYIGGPLTNSKGQNCGYRRCRASGVLTTSCGNTITCYLKASAACRAAKLRDCTMLVCGDDLVVICESAGVQEDAANLRAFTEAMTRYSAPPGDPPQPEYDLELITSCSSNVSVAHDGAGKRVYYLTRDPETPLARAAWETARHTPVNSWLGNIIMFAPTLWVRMVLMTHFFSILIAQEHLEKALDCEIYGAVHSVQPLDLPEIIQRLHGLSAFSLHSYSPGEINRVAACLRKLGVPPLRAWRHRARSVRATLLSQGGRAAICGKYLFNWAVKTKLKLTPLPSASQLDLSNWFTGGYSGGDIYHSVSHVRPRWFFWCLLLLSVGVGIYLLPNR.

The residue at position 2 (Ser2) is an N-acetylserine; by host. Residues 2-23 form an interaction with STAT1 region; sequence STNPKPQRKTKRNTNRRPQDVK. Residues 2-58 form an interaction with EIF2AK2/PKR region; that stretch reads STNPKPQRKTKRNTNRRPQDVKFPGGGQIVGGVYLLPRRGPRVGVRATRKTSERSQP. The tract at residues 2–59 is interaction with DDX3X; it reads STNPKPQRKTKRNTNRRPQDVKFPGGGQIVGGVYLLPRRGPRVGVRATRKTSERSQPR. A disordered region spans residues 2–75; that stretch reads STNPKPQRKT…PKARRPEGRS (74 aa). Residues 2–168 lie on the Cytoplasmic side of the membrane; the sequence is STNPKPQRKT…EDGVNYATGN (167 aa). 2 short sequence motifs (nuclear localization signal) span residues 5–13 and 38–43; these read PKPQRKTKR and PRRGPR. Basic residues predominate over residues 7-16; it reads PQRKTKRNTN. Ser53 bears the Phosphoserine; by host mark. Short sequence motifs (nuclear localization signal) lie at residues 58 to 64 and 66 to 71; these read PRGRRQP and PKARRP. Over residues 58-68 the composition is skewed to basic residues; sequence PRGRRQPIPKA. Ser99 carries the phosphoserine; by host modification. The important for endoplasmic reticulum and mitochondrial localization stretch occupies residues 112–152; sequence PRRRSRNLGKVIDTLTCGFADLMGYIPLVGAPLGGAARALA. Position 116 is a phosphoserine; by host PKA (Ser116). Positions 122 to 173 are interaction with APOA2; the sequence is VIDTLTCGFADLMGYIPLVGAPLGGAARALAHGVRVLEDGVNYATGNLPGCS. The interval 164 to 167 is important for lipid droplets localization; that stretch reads YATG. The chain crosses the membrane as a helical span at residues 169–189; sequence LPGCSFSIFLLALLSCLTVPA. The propeptide at 178–191 is ER anchor for the core protein, removed in mature form by host signal peptidase; that stretch reads LLALLSCLTVPASA. Residues 190–358 are Lumenal-facing; it reads SAVGVRNSSG…AGAHWGVLAG (169 aa). Asn196, Asn209, and Asn234 each carry an N-linked (GlcNAc...) asparagine; by host glycan. The segment at 265-296 is important for fusion; the sequence is IVGAAAFCSAMYVGDLCGSIFLVGQIFTFSPR. An N-linked (GlcNAc...) asparagine; by host glycan is attached at Asn305. The helical transmembrane segment at 359-379 threads the bilayer; it reads LAYYSMVGNWAKVVVVLLLFA. Topologically, residues 380–725 are lumenal; it reads GVDAETRVTG…WEYVVLLFLL (346 aa). Residues 385 to 411 are HVR1; the sequence is TRVTGGAAGHTAFGFASFLAPGAKQKI. 4 N-linked (GlcNAc...) (high mannose) asparagine; by host glycosylation sites follow: Asn417, Asn423, Asn430, and Asn448. 4 disulfides stabilise this stretch: Cys429–Cys552, Cys452–Cys459, Cys486–Cys494, and Cys503–Cys508. Positions 474-479 are HVR2; it reads HEGNAS. The segment at 480–493 is CD81-binding 1; that stretch reads DDQRPYCWHYALRP. A glycan (N-linked (GlcNAc...) (high mannose) asparagine; by host) is linked at Asn532. Asn540 carries an N-linked (GlcNAc...) asparagine; by host glycan. The segment at 544 to 551 is CD81-binding 2; sequence PPMGNWFG. Asn556 carries N-linked (GlcNAc...) (high mannose) asparagine; by host glycosylation. Cys564 and Cys569 are disulfide-bonded. The N-linked (GlcNAc...) (high mannose) asparagine; by host glycan is linked to Asn576. Cystine bridges form between Cys581–Cys585, Cys597–Cys620, and Cys607–Cys644. Residues Asn623 and Asn645 are each glycosylated (N-linked (GlcNAc...) (high mannose) asparagine; by host). Cys652 and Cys677 are joined by a disulfide. The tract at residues 660 to 671 is PKR/eIF2-alpha phosphorylation homology domain (PePHD); it reads AELSPLLLSTTQ. A helical transmembrane segment spans residues 726 to 746; it reads LADARICACLWMMLLISQVEA. Topologically, residues 747–757 are lumenal; it reads ALENLIVLNAA. A helical transmembrane segment spans residues 758–778; it reads SLVGTHGIVPFFIFFCAAWYL. The Cytoplasmic segment spans residues 779–781; it reads KGK. A helical membrane pass occupies residues 782-803; that stretch reads WAPGLAYSVYGMWPLLLLLLAL. At 804 to 813 the chain is on the lumenal side; that stretch reads PQRAYALDQE. The chain crosses the membrane as a helical span at residues 814-834; the sequence is LAASCGATVFICLAVLTLSPY. Residues 835–838 lie on the Cytoplasmic side of the membrane; the sequence is YKQY. A helical membrane pass occupies residues 839–859; it reads MARGIWWLQYMLTRAEALLQV. Topologically, residues 860–881 are lumenal; that stretch reads WVPPLNARGGRDGVVLLTCVLH. Residues 882-902 form a helical membrane-spanning segment; it reads PHLLFEITKIMLAILGPLWIL. One can recognise a Peptidase C18 domain in the interval 903–1026; that stretch reads QASLLKVPYF…ALTDKGWRLL (124 aa). At 903–1657 the chain is on the cytoplasmic side; it reads QASLLKVPYF…CMSADLEVVT (755 aa). Residues 904-1206 form a protease NS2-3 region; it reads ASLLKVPYFV…PVESLETTMR (303 aa). Cys922 carries the S-palmitoyl cysteine; by host lipid modification. The tract at residues 929–949 is interaction with host SCPS1; that stretch reads AGGQYVQMALLKLGAFAGTYI. Catalysis depends on for protease NS2 activity; shared with dimeric partner residues His952, Glu972, and Cys993. In terms of domain architecture, Peptidase S29 spans 1027 to 1208; it reads APITAYAQQT…ESLETTMRSP (182 aa). Residues His1083 and Asp1107 each act as charge relay system; for serine protease NS3 activity in the active site. Cys1123 and Cys1125 together coordinate Zn(2+). The Charge relay system; for serine protease NS3 activity role is filled by Ser1165. Residues Cys1171 and His1175 each contribute to the Zn(2+) site. Residues 1217-1369 enclose the Helicase ATP-binding domain; that stretch reads PTVPQSYQVA…SNIEEVALST (153 aa). Residue 1230–1237 coordinates ATP; sequence APTGSGKS. 2 residues coordinate Mg(2+): Ser1237 and Glu1317. Residues 1316 to 1319 carry the DECH box motif; it reads DECH. Residues 1486–1497 form an RNA-binding region; it reads QRRGRTGRGKHG. Residues 1658-1678 form a helical membrane-spanning segment; sequence STWVLVGGVLAALAAYCLSTG. The NS3-binding stretch occupies residues 1679–1690; it reads SVVIVGRIILSG. Topologically, residues 1679-1805 are cytoplasmic; the sequence is SVVIVGRIIL…AVTSPLTTQQ (127 aa). A helical transmembrane segment spans residues 1806-1824; it reads TLLFNILGGWVAAQLAAPA. Over 1825 to 1828 the chain is Lumenal; it reads AATA. A helical transmembrane segment spans residues 1829-1849; sequence FVGAGITGAVIGSVGLGKVLV. Position 1850 (Asp1850) is a topological domain, cytoplasmic. A helical transmembrane segment spans residues 1851 to 1871; it reads ILAGYGAGVAGALVAFKIMSG. Residues 1872–1881 are Lumenal-facing; it reads EAPTAEDLVN. The helical transmembrane segment at 1882–1902 threads the bilayer; it reads LLPAILSPGALVVGVVCAAIL. At 1903–1972 the chain is on the cytoplasmic side; it reads RRHVGPGEGA…WISSDCTAPC (70 aa). S-palmitoyl cysteine; by host attachment occurs at residues Cys1968 and Cys1972. An intramembrane segment occupies 1973-2002; that stretch reads AGSWLKDVWDWICEVLSDFKSWLKAKLMPQ. Topologically, residues 2003–2990 are cytoplasmic; sequence LPGIPFVSCQ…YHSVSHVRPR (988 aa). Zn(2+) contacts are provided by Cys2011, Cys2029, Cys2031, and Cys2052. Residues 2120-2208 form an FKBP8-binding region; the sequence is EFFTEVDGVR…ASSSASQLSA (89 aa). Positions 2120 to 2332 are transcriptional activation; it reads EFFTEVDGVR…PVPPPRRKRT (213 aa). The segment at 2135–2139 is interaction with non-structural protein 4A; that stretch reads PPCKP. Residues 2189–2441 are interaction with host SKP2; sequence RLNRGSPPSL…TPCAAEETKL (253 aa). Phosphoserine; by host; in p56 is present on Ser2194. Phosphoserine; by host; in p58 is present on residues Ser2197, Ser2201, Ser2204, Ser2207, and Ser2210. Positions 2210-2249 are ISDR; that stretch reads SLKATCTTHHDSPDADLITANLLWRQEMGGNITRVESENK. The tract at residues 2210–2275 is interaction with EIF2AK2/PKR; that stretch reads SLKATCTTHH…REISVPAEIL (66 aa). An NS4B-binding region spans residues 2249–2306; sequence KIVILDSFDPLVAEEDDREISVPAEILLKSKKFPPAMPIWARPDYNPPLVEPWKRPDY. Positions 2322 to 2325 match the SH3-binding motif; that stretch reads TPVP. The short motif at 2326–2334 is the Nuclear localization signal element; it reads PPRRKRTVV. Lys2350 participates in a covalent cross-link: Glycyl lysine isopeptide (Lys-Gly) (interchain with G-Cter in ubiquitin). Residues 2352 to 2373 are compositionally biased toward low complexity; that stretch reads FGSSTTSGVTSGEAAESSPAPS. A disordered region spans residues 2352–2409; that stretch reads FGSSTTSGVTSGEAAESSPAPSCDGELDSEAESYSSMPPLEGEPGDPDLSDGSWSTVS. Positions 2354–2377 are V3; sequence SSTTSGVTSGEAAESSPAPSCDGE. A phosphoserine; by host mark is found at Ser2449 and Ser2462. A RdRp catalytic domain is found at 2634–2752; sequence PMGFSYDTRC…ICESAGVQED (119 aa). Residues Asp2640, Asp2738, and Asp2739 each contribute to the Mg(2+) site. A helical membrane pass occupies residues 2991–3011; it reads WFFWCLLLLSVGVGIYLLPNR.

The protein belongs to the hepacivirus polyprotein family. In terms of assembly, homooligomer. Interacts with E1 (via C-terminus). Interacts with the non-structural protein 5A. Interacts (via N-terminus) with host STAT1 (via SH2 domain); this interaction results in decreased STAT1 phosphorylation and ubiquitin-mediated proteasome-dependent STAT1 degradation, leading to decreased IFN-stimulated gene transcription. Interacts with host STAT3; this interaction constitutively activates STAT3. Interacts with host LTBR receptor. Interacts with host TNFRSF1A receptor and possibly induces apoptosis. Interacts with host HNRPK. Interacts with host YWHAE. Interacts with host UBE3A/E6AP. Interacts with host DDX3X. Interacts with host APOA2. Interacts with host RXRA protein. Interacts with host SP110 isoform 3/Sp110b; this interaction sequesters the transcriptional corepressor SP110 away from the nucleus. Interacts with host CREB3 nuclear transcription protein; this interaction triggers cell transformation. Interacts with host ACY3. Interacts with host C1QR1. Interacts with host RBM24; this interaction, which enhances the interaction of the mature core protein with 5'-UTR, may inhibit viral translation and favor replication. Interacts with host EIF2AK2/PKR; this interaction induces the autophosphorylation of EIF2AK2. Part of the viral assembly initiation complex composed of NS2, E1, E2, NS3, NS4A, NS5A and the mature core protein. As to quaternary structure, forms a heterodimer with envelope glycoprotein E2. Interacts with mature core protein. Interacts with protease NS2. The heterodimer E1/E2 interacts with host CLDN1; this interaction plays a role in viral entry into host cell. Interacts with host SPSB2 (via C-terminus). Part of the viral assembly initiation complex composed of NS2, E1, E2, NS3, NS4A, NS5A and the mature core protein. Interacts with host NEURL3; this interaction prevents E1 binding to glycoprotein E2. Forms a heterodimer with envelope glycoprotein E1. Interacts with host CD81 and SCARB1 receptors; these interactions play a role in viral entry into host cell. Interacts with host EIF2AK2/PKR; this interaction inhibits EIF2AK2 and probably allows the virus to evade the innate immune response. Interacts with host CD209/DC-SIGN and CLEC4M/DC-SIGNR. Interact with host SPCS1; this interaction is essential for viral particle assembly. Interacts with protease NS2. The heterodimer E1/E2 interacts with host CLDN1; this interaction plays a role in viral entry into host cell. Part of the viral assembly initiation complex composed of NS2, E1, E2, NS3, NS4A, NS5A and the mature core protein. Interacts with host SLC3A2/4F2hc; the interaction may facilitate viral entry into host cell. Interacts with human PLSCR1. In terms of assembly, homohexamer. Homoheptamer. Interacts with protease NS2. As to quaternary structure, homodimer. Interacts with host SPCS1; this interaction is essential for viral particle assembly. Interacts with envelope glycoprotein E1. Interacts with envelope glycoprotein E2. Interacts with viroporin p7. Interacts with serine protease/helicase NS3. Part of the replication complex composed of NS2, NS3, NS4A, NS4B, NS5A and the RNA-directed RNA polymerase embedded in an ER-derived membranous web. Part of the viral assembly initiation complex composed of NS2, E1, E2, NS3, NS4A, NS5A and the mature core protein. Interacts with protease NS2. Interacts with non-structural protein 4A; this interaction stabilizes the folding of NS3 serine protease. NS3-NS4A interaction is essential for NS3 activation and allows membrane anchorage of the latter. NS3/NS4A complex also prevents phosphorylation of host IRF3, thus preventing the establishment of dsRNA induced antiviral state. Interacts with host MAVS; this interaction leads to the cleavage and inhibition of host MAVS. Interacts with host TICAM1; this interaction leads to the cleavage and inhibition of host TICAM1. Interacts with host TANK-binding kinase/TBK1; this interaction results in the inhibition of the association between TBK1 and IRF3, which leads to the inhibition of IRF3 activation. Interacts with host RBM24. Part of the replication complex composed of NS2, NS3, NS4A, NS4B, NS5A and the RNA-directed RNA polymerase embedded in an ER-derived membranous web. Part of the viral assembly initiation complex composed of NS2, E1, E2, NS3, NS4A, NS5A and the mature core protein. In terms of assembly, interacts with NS3 serine protease; this interaction stabilizes the folding of NS3 serine protease. NS3-NS4A interaction is essential for NS3 activation and allows membrane anchorage of the latter. Interacts with non-structural protein 5A (via N-terminus). Part of the replication complex composed of NS2, NS3, NS4A, NS4B, NS5A and the RNA-directed RNA polymerase embedded in an ER-derived membranous web. Part of the viral assembly initiation complex composed of NS2, E1, E2, NS3, NS4A, NS5A and the mature core protein. As to quaternary structure, homomultimer. Interacts with non-structural protein NS5A. Interacts with host PLA2G4C; this interaction likely initiates the recruitment of replication complexes to lipid droplets. Interacts with host STING; this interaction disrupts the interaction between STING and TBK1 thereby suppressing the interferon signaling. Part of the replication complex composed of NS2, NS3, NS4A, NS4B, NS5A and the RNA-directed RNA polymerase embedded in an ER-derived membranous web. Monomer. Homodimer; dimerization is required for RNA-binding. Interacts with the mature core protein. Interacts (via N-terminus) with non-structural protein 4A. Interacts with non-structural protein 4B. Interacts (via region D2) with RNA-directed RNA polymerase. Part of the viral assembly initiation complex composed of NS2, E1, E2, NS3, NS4A, NS5A and the mature core protein. Part of the replication complex composed of NS2, NS3, NS4A, NS4B, NS5A and the RNA-directed RNA polymerase embedded in an ER-derived membranous web. Interacts with host GRB2. Interacts with host BIN1. Interacts with host PIK3R1. Interacts with host SRCAP. Interacts with host FKBP8. Interacts (via C-terminus) with host VAPB (via MSP domain). Interacts with host EIF2AK2/PKR; this interaction leads to disruption of EIF2AK2 dimerization by NS5A and probably allows the virus to evade the innate immune response. Interacts (via N-terminus) with host PACSIN2 (via N-terminus); this interaction attenuates protein kinase C alpha-mediated phosphorylation of PACSIN2 by disrupting the interaction between PACSIN2 and PRKCA. Interacts (via N-terminus) with host SRC kinase (via SH2 domain). Interacts with most Src-family kinases. Interacts with host IFI27 and SKP2; promotes the ubiquitin-mediated proteasomal degradation of NS5A. Interacts with host GPS2. Interacts with host TNFRSF21; this interaction allows the modulation by the virus of JNK, p38 MAPK, STAT3, and Akt signaling pathways in a DR6-dependent manner. Interacts (via N-terminus) with host CIDEB (via N-terminus); this interaction seems to regulate the association of HCV particles with APOE. Interacts with host CHKA/Choline Kinase-alpha; CHKA bridges host PI4KA and NS5A and potentiates NS5A-stimulated PI4KA activity, which then facilitates the targeting of the ternary complex to the ER for viral replication. Interacts with host SPSB2 (via C-terminus); this interaction targets NS5A for ubiquitination and degradation. Interacts with host RAB18; this interaction may promote the association of NS5A and other replicase components with lipid droplets. Interacts (via region D2) with host PPIA/CYPA; the interaction stimulates RNA-binding ability of NS5A and is dependent on the peptidyl-prolyl cis-trans isomerase activity of PPIA/CYPA. Interacts with host TRIM14; this interaction induces the degradation of NS5A. In terms of assembly, homooligomer. Interacts with non-structural protein 5A. Interacts with host VAPB. Interacts with host PRK2/PKN2. Interacts with host HNRNPA1 and SEPT6; these interactions facilitate viral replication. Part of the replication complex composed of NS2, NS3, NS4A, NS4B, NS5A and the RNA-directed RNA polymerase. Zn(2+) is required as a cofactor. Requires Mg(2+) as cofactor. Post-translationally, specific enzymatic cleavages in vivo yield mature proteins. The structural proteins, core, E1, E2 and p7 are produced by proteolytic processing by host signal peptidases. The core protein precursor is synthesized as a 23 kDa, which is retained in the ER membrane through the hydrophobic signal peptide. Cleavage by the signal peptidase releases the 21 kDa mature core protein. The cleavage of the core protein precursor occurs between aminoacids 176 and 188 but the exact cleavage site is not known. Some degraded forms of the core protein appear as well during the course of infection. The other proteins (p7, NS2, NS3, NS4A, NS4B, NS5A and NS5B) are cleaved by the viral proteases. Autoprocessing between NS2 and NS3 is mediated by the NS2 cysteine protease catalytic domain and regulated by the NS3 N-terminal domain. Phosphorylated by host PKC and PKA. In terms of processing, ubiquitinated; mediated by UBE3A and leading to core protein subsequent proteasomal degradation. Post-translationally, highly N-glycosylated. Palmitoylation is required for NS2/3 autoprocessing and E2 recruitment to membranes. In terms of processing, palmitoylated. This modification may play a role in its polymerization or in protein-protein interactions. Post-translationally, phosphorylated on serines in a basal form termed p56. p58 is a hyperphosphorylated form of p56. p56 and p58 coexist in the cell in roughly equivalent amounts. Hyperphosphorylation is dependent on the presence of NS4A. Host CSNK1A1/CKI-alpha or RPS6KB1 kinases may be responsible for NS5A phosphorylation. Tyrosine phosphorylation is essential for the interaction with host SRC. In terms of processing, the N-terminus is phosphorylated by host PRK2/PKN2.

Its subcellular location is the host endoplasmic reticulum membrane. The protein localises to the host mitochondrion membrane. It is found in the virion. The protein resides in the host cytoplasm. It localises to the host nucleus. Its subcellular location is the host lipid droplet. The protein localises to the virion membrane. It is found in the host mitochondrion. The protein resides in the host cell membrane. It localises to the host perinuclear region. The enzyme catalyses Hydrolysis of four peptide bonds in the viral precursor polyprotein, commonly with Asp or Glu in the P6 position, Cys or Thr in P1 and Ser or Ala in P1'.. The catalysed reaction is a ribonucleoside 5'-triphosphate + H2O = a ribonucleoside 5'-diphosphate + phosphate + H(+). It catalyses the reaction ATP + H2O = ADP + phosphate + H(+). It carries out the reaction RNA(n) + a ribonucleoside 5'-triphosphate = RNA(n+1) + diphosphate. Its activity is regulated as follows. Inhibited by the antiviral drug hexamethylene amiloride. Inhibition by amantadine appears to be genotype-dependent. Also inhibited by long-alkyl-chain iminosugar derivatives. With respect to regulation, activity is up-regulated by PRK2/PKN2-mediated phosphorylation. In terms of biological role, packages viral RNA to form a viral nucleocapsid, and promotes virion budding. Participates in the viral particle production as a result of its interaction with the non-structural protein 5A. Binds RNA and may function as a RNA chaperone to induce the RNA structural rearrangements taking place during virus replication. Modulates viral translation initiation by interacting with viral IRES and 40S ribosomal subunit. Affects various cell signaling pathways, host immunity and lipid metabolism. Prevents the establishment of cellular antiviral state by blocking the interferon-alpha/beta (IFN-alpha/beta) and IFN-gamma signaling pathways and by blocking the formation of phosphorylated STAT1 and promoting ubiquitin-mediated proteasome-dependent degradation of STAT1. Activates STAT3 leading to cellular transformation. Regulates the activity of cellular genes, including c-myc and c-fos. May repress the promoter of p53, and sequester CREB3 and SP110 isoform 3/Sp110b in the cytoplasm. Represses cell cycle negative regulating factor CDKN1A, thereby interrupting an important check point of normal cell cycle regulation. Targets transcription factors involved in the regulation of inflammatory responses and in the immune response: suppresses TNF-induced NF-kappa-B activation, and activates AP-1. Binds to dendritic cells (DCs) via C1QR1, resulting in down-regulation of T-lymphocytes proliferation. Alters lipid metabolism by interacting with hepatocellular proteins involved in lipid accumulation and storage. Induces up-regulation of FAS promoter activity, and thereby contributes to the increased triglyceride accumulation in hepatocytes (steatosis). Forms a heterodimer with envelope glycoprotein E2, which mediates virus attachment to the host cell, virion internalization through clathrin-dependent endocytosis and fusion with host membrane. Fusion with the host cell is most likely mediated by both E1 and E2, through conformational rearrangements of the heterodimer required for fusion rather than a classical class II fusion mechanism. E1/E2 heterodimer binds host apolipoproteins such as APOB and ApoE thereby forming a lipo-viro-particle (LVP). APOE associated to the LVP allows the initial virus attachment to cell surface receptors such as the heparan sulfate proteoglycans (HSPGs), syndecan-1 (SDC1), syndecan-1 (SDC2), the low-density lipoprotein receptor (LDLR) and scavenger receptor class B type I (SCARB1). The cholesterol transfer activity of SCARB1 allows E2 exposure and binding of E2 to SCARB1 and the tetraspanin CD81. E1/E2 heterodimer binding on CD81 activates the epithelial growth factor receptor (EGFR) signaling pathway. Diffusion of the complex E1-E2-EGFR-SCARB1-CD81 to the cell lateral membrane allows further interaction with Claudin 1 (CLDN1) and occludin (OCLN) to finally trigger HCV entry. Its function is as follows. Forms a heterodimer with envelope glycoprotein E1, which mediates virus attachment to the host cell, virion internalization through clathrin-dependent endocytosis and fusion with host membrane. Fusion with the host cell is most likely mediated by both E1 and E2, through conformational rearrangements of the heterodimer required for fusion rather than a classical class II fusion mechanism. The interaction between envelope glycoprotein E2 and host apolipoprotein E/APOE allows the proper assembly, maturation and infectivity of the viral particles. This interaction is probably promoted via the up-regulation of cellular autophagy by the virus. E1/E2 heterodimer binds host apolipoproteins such as APOB and APOE thereby forming a lipo-viro-particle (LVP). APOE associated to the LVP allows the initial virus attachment to cell surface receptors such as the heparan sulfate proteoglycans (HSPGs), syndecan-1 (SDC1), syndecan-1 (SDC2), the low-density lipoprotein receptor (LDLR) and scavenger receptor class B type I (SCARB1). The cholesterol transfer activity of SCARB1 allows E2 exposure and binding of E2 to SCARB1 and the tetraspanin CD81. E1/E2 heterodimer binding on CD81 activates the epithelial growth factor receptor (EGFR) signaling pathway. Diffusion of the complex E1-E2-EGFR-SCARB1-CD81 to the cell lateral membrane allows further interaction with Claudin 1 (CLDN1) and occludin (OCLN) to finally trigger HCV entry. Inhibits host EIF2AK2/PKR activation, preventing the establishment of an antiviral state. Viral ligand for CD209/DC-SIGN and CLEC4M/DC-SIGNR, which are respectively found on dendritic cells (DCs), and on liver sinusoidal endothelial cells and macrophage-like cells of lymph node sinuses. These interactions allow the capture of circulating HCV particles by these cells and subsequent facilitated transmission to permissive cells such as hepatocytes and lymphocyte subpopulations. The interaction between E2 and host amino acid transporter complex formed by SLC3A2 and SLC7A5/LAT1 may facilitate viral entry into host cell. Functionally, ion channel protein that acts as a viroporin and plays an essential role in the assembly, envelopment and secretion of viral particles. Regulates the host cell secretory pathway, which induces the intracellular retention of viral glycoproteins and favors assembly of viral particles. Creates a pore in acidic organelles and releases Ca(2+) and H(+) in the cytoplasm of infected cells, leading to a productive viral infection. High levels of cytoplasmic Ca(2+) may trigger membrane trafficking and transport of viral ER-associated proteins to viroplasms, sites of viral genome replication. This ionic imbalance induces the assembly of the inflammasome complex, which triggers the maturation of pro-IL-1beta into IL-1beta through the action of caspase-1. Targets also host mitochondria and induces mitochondrial depolarization. In addition of its role as a viroporin, acts as a lipid raft adhesion factor. In terms of biological role, cysteine protease required for the proteolytic auto-cleavage between the non-structural proteins NS2 and NS3. The N-terminus of NS3 is required for the function of NS2 protease (active region NS2-3). Promotes the initiation of viral particle assembly by mediating the interaction between structural and non-structural proteins. Displays three enzymatic activities: serine protease with a chymotrypsin-like fold, NTPase and RNA helicase. NS3 serine protease, in association with NS4A, is responsible for the cleavages of NS3-NS4A, NS4A-NS4B, NS4B-NS5A and NS5A-NS5B. The NS3/NS4A complex prevents phosphorylation of host IRF3, thus preventing the establishment of dsRNA induced antiviral state. The NS3/NS4A complex induces host amino acid transporter component SLC3A2, thus contributing to HCV propagation. NS3 RNA helicase binds to RNA and unwinds both dsDNA and dsRNA in the 3' to 5' direction, and likely resolves RNA complicated stable secondary structures in the template strand. Binds a single ATP and catalyzes the unzipping of a single base pair of dsRNA. Inhibits host antiviral proteins TBK1 and IRF3 thereby preventing the establishment of an antiviral state. Cleaves host MAVS/CARDIF thereby preventing the establishment of an antiviral state. Cleaves host TICAM1/TRIF, thereby disrupting TLR3 signaling and preventing the establishment of an antiviral state. Its function is as follows. Induces a specific membrane alteration that serves as a scaffold for the virus replication complex. This membrane alteration gives rise to the so-called ER-derived membranous web that contains the replication complex. NS4B self-interaction contributes to its function in membranous web formation. Promotes host TRIF protein degradation in a CASP8-dependent manner thereby inhibiting host TLR3-mediated interferon signaling. Disrupts the interaction between STING and TBK1 contributing to the inhibition of interferon signaling. Functionally, phosphorylated protein that is indispensable for viral replication and assembly. Both hypo- and hyperphosphorylated states are required for the viral life cycle. The hyperphosphorylated form of NS5A is an inhibitor of viral replication. Involved in RNA-binding and especially in binding to the viral genome. Zinc is essential for RNA-binding. Participates in the viral particle production as a result of its interaction with the mature viral core protein. Its interaction with host VAPB may target the viral replication complex to vesicles. Down-regulates viral IRES translation initiation. Mediates interferon resistance, presumably by interacting with and inhibiting host EIF2AK2/PKR. Prevents BIN1-induced apoptosis. Acts as a transcriptional activator of some host genes important for viral replication when localized in the nucleus. Via the interaction with host PACSIN2, modulates lipid droplet formation in order to promote virion assembly. Modulates TNFRSF21/DR6 signaling pathway for viral propagation. In terms of biological role, RNA-dependent RNA polymerase that performs primer-template recognition and RNA synthesis during viral replication. Initiates RNA transcription/replication at a flavin adenine dinucleotide (FAD), resulting in a 5'- FAD cap on viral RNAs. In this way, recognition of viral 5' RNA by host pattern recognition receptors can be bypassed, thereby evading activation of antiviral pathways. This is Genome polyprotein from Homo sapiens (Human).